Consider the following 102-residue polypeptide: Envelope glycoprotein N (102 aa).

The signal sequence occupies residues 1–32; sequence MGKVLRKPFAKAVPLLFLAATWLLTGVLPAGA. At 33–69 the chain is on the virion surface side; it reads SSPTNAAAASLTEAQDQFYSYTCNADTFSPSLTSFAS. Residues 70-90 traverse the membrane as a helical segment; sequence IWALLTLVLVIIASAIYLMYV. At 91-102 the chain is on the intravirion side; the sequence is CFNKFVNTLLTD.

This sequence belongs to the herpesviridae glycoprotein N family. In terms of assembly, interacts (via N-terminus) with gM (via N-terminus). The gM-gN heterodimer forms the gCII complex. O-glycosylated. Contains alpha 2,6-sialic acid residues.

The protein localises to the virion membrane. It localises to the host membrane. Its subcellular location is the host Golgi apparatus. The protein resides in the host trans-Golgi network. In terms of biological role, envelope glycoprotein necessary for proper maturation of gM and modulation of its membrane fusion activity. Also plays a critical role in virion morphogenesis. The polypeptide is Envelope glycoprotein N (Epstein-Barr virus (strain AG876) (HHV-4)).